The sequence spans 443 residues: Light-independent protochlorophyllide reductase subunit N (443 aa).

Residues C15, C40, and C99 each contribute to the [4Fe-4S] cluster site.

This sequence belongs to the BchN/ChlN family. As to quaternary structure, protochlorophyllide reductase is composed of three subunits; BchL, BchN and BchB. Forms a heterotetramer of two BchB and two BchN subunits. [4Fe-4S] cluster serves as cofactor.

The enzyme catalyses chlorophyllide a + oxidized 2[4Fe-4S]-[ferredoxin] + 2 ADP + 2 phosphate = protochlorophyllide a + reduced 2[4Fe-4S]-[ferredoxin] + 2 ATP + 2 H2O. It participates in porphyrin-containing compound metabolism; bacteriochlorophyll biosynthesis (light-independent). Its function is as follows. Component of the dark-operative protochlorophyllide reductase (DPOR) that uses Mg-ATP and reduced ferredoxin to reduce ring D of protochlorophyllide (Pchlide) to form chlorophyllide a (Chlide). This reaction is light-independent. The NB-protein (BchN-BchB) is the catalytic component of the complex. This chain is Light-independent protochlorophyllide reductase subunit N, found in Heliobacterium modesticaldum (strain ATCC 51547 / Ice1).